The following is a 395-amino-acid chain: F-box/kelch-repeat protein At3g13680 (395 aa).

In terms of domain architecture, F-box spans 1-47; that stretch reads MTTMGDLPGDLVEEILSRVPLTSLRAIRSTCQKWNSLSKSQICGRKA. Kelch repeat units follow at residues 154-202, 210-256, 265-314, and 337-383; these read ILRI…SLKG, KKET…VSLA, VLYQ…FIDE, and IVYI…LVQL.

The polypeptide is F-box/kelch-repeat protein At3g13680 (Arabidopsis thaliana (Mouse-ear cress)).